The sequence spans 553 residues: Dihydrolipoyllysine-residue acetyltransferase component of pyruvate dehydrogenase complex (553 aa).

The region spanning 2-77 (AFSVQMPALG…EVGGELAVIG (76 aa)) is the Lipoyl-binding 1 domain. An N6-lipoyllysine modification is found at K43. Residues 81 to 125 (DAGEAAAPAPEKVPAAQPESKPAPEPPPVQPTSGAPAGGDAKPVL) are disordered. Low complexity predominate over residues 84–100 (EAAAPAPEKVPAAQPES). The span at 101-110 (KPAPEPPPVQ) shows a compositional bias: pro residues. The Lipoyl-binding 2 domain maps to 121 to 196 (AKPVLMPELG…PVGGELARIG (76 aa)). K162 is modified (N6-lipoyllysine). 2 disordered regions span residues 204–238 (APAP…AGAA) and 278–321 (AAAE…TQKA). The span at 206–232 (APKPAPKPVPEPAPTPKAEPAPSPPAA) shows a compositional bias: pro residues. The region spanning 243–280 (YVTPLVRKLASENNIDLAGVTGTGVGGRIRKQDVLAAA) is the Peripheral subunit-binding (PSBD) domain. The span at 288-300 (APAPAAQAAAAPA) shows a compositional bias: low complexity. Active-site residues include H523 and D527.

This sequence belongs to the 2-oxoacid dehydrogenase family. In terms of assembly, forms a 24-polypeptide structural core with octahedral symmetry. Part of the PDH complex, consisting of multiple copies of AceE (E1), DlaT (E2) and Lpd (E3). (R)-lipoate serves as cofactor.

It carries out the reaction N(6)-[(R)-dihydrolipoyl]-L-lysyl-[protein] + acetyl-CoA = N(6)-[(R)-S(8)-acetyldihydrolipoyl]-L-lysyl-[protein] + CoA. In terms of biological role, component of the pyruvate dehydrogenase (PDH) complex, that catalyzes the overall conversion of pyruvate to acetyl-CoA and CO(2). In Mycobacterium bovis (strain ATCC BAA-935 / AF2122/97), this protein is Dihydrolipoyllysine-residue acetyltransferase component of pyruvate dehydrogenase complex (dlaT).